We begin with the raw amino-acid sequence, 257 residues long: Acyl-[acyl-carrier-protein]--UDP-N-acetylglucosamine O-acyltransferase (257 aa).

This sequence belongs to the transferase hexapeptide repeat family. LpxA subfamily. In terms of assembly, homotrimer.

It is found in the cytoplasm. It carries out the reaction a (3R)-hydroxyacyl-[ACP] + UDP-N-acetyl-alpha-D-glucosamine = a UDP-3-O-[(3R)-3-hydroxyacyl]-N-acetyl-alpha-D-glucosamine + holo-[ACP]. It functions in the pathway glycolipid biosynthesis; lipid IV(A) biosynthesis; lipid IV(A) from (3R)-3-hydroxytetradecanoyl-[acyl-carrier-protein] and UDP-N-acetyl-alpha-D-glucosamine: step 1/6. Functionally, involved in the biosynthesis of lipid A, a phosphorylated glycolipid that anchors the lipopolysaccharide to the outer membrane of the cell. This Anaeromyxobacter dehalogenans (strain 2CP-1 / ATCC BAA-258) protein is Acyl-[acyl-carrier-protein]--UDP-N-acetylglucosamine O-acyltransferase.